A 228-amino-acid polypeptide reads, in one-letter code: 3-oxoadipate CoA-transferase subunit A (228 aa).

25 to 31 (GGFGTAG) provides a ligand contact to CoA.

It belongs to the 3-oxoacid CoA-transferase subunit A family. In terms of assembly, heterodimer.

It catalyses the reaction 3-oxoadipate + succinyl-CoA = 3-oxoadipyl-CoA + succinate. It functions in the pathway aromatic compound metabolism; beta-ketoadipate pathway; acetyl-CoA and succinyl-CoA from 3-oxoadipate: step 1/2. This is 3-oxoadipate CoA-transferase subunit A (pcaI) from Acinetobacter baylyi (strain ATCC 33305 / BD413 / ADP1).